A 214-amino-acid chain; its full sequence is MLQPQVPVAREGVPFIGFAAFLTLVSAASECEILTFIFLLATAFTLYFFRDPERFVPDDPSALISPADGKIIVIEKTDKQDFIEGEALKISIFMNVFNVHVNRAPIAGKVDKIIYTPGKFYSADSSQGAEYNENCGIVLTTNSGKKIAFVQVAGLIARRIVCWLEPNDTIQSGRRVGLIRFGSRVDLYLPTDTALSVSVGDKVRAGETILGQII.

Serine 183 functions as the Schiff-base intermediate with substrate; via pyruvic acid in the catalytic mechanism. Serine 183 is modified (pyruvic acid (Ser); by autocatalysis).

This sequence belongs to the phosphatidylserine decarboxylase family. PSD-A subfamily. As to quaternary structure, heterodimer of a large membrane-associated beta subunit and a small pyruvoyl-containing alpha subunit. It depends on pyruvate as a cofactor. Is synthesized initially as an inactive proenzyme. Formation of the active enzyme involves a self-maturation process in which the active site pyruvoyl group is generated from an internal serine residue via an autocatalytic post-translational modification. Two non-identical subunits are generated from the proenzyme in this reaction, and the pyruvate is formed at the N-terminus of the alpha chain, which is derived from the carboxyl end of the proenzyme. The post-translation cleavage follows an unusual pathway, termed non-hydrolytic serinolysis, in which the side chain hydroxyl group of the serine supplies its oxygen atom to form the C-terminus of the beta chain, while the remainder of the serine residue undergoes an oxidative deamination to produce ammonia and the pyruvoyl prosthetic group on the alpha chain.

The protein resides in the cell membrane. It catalyses the reaction a 1,2-diacyl-sn-glycero-3-phospho-L-serine + H(+) = a 1,2-diacyl-sn-glycero-3-phosphoethanolamine + CO2. The protein operates within phospholipid metabolism; phosphatidylethanolamine biosynthesis; phosphatidylethanolamine from CDP-diacylglycerol: step 2/2. In terms of biological role, catalyzes the formation of phosphatidylethanolamine (PtdEtn) from phosphatidylserine (PtdSer). The protein is Phosphatidylserine decarboxylase proenzyme of Desulfotalea psychrophila (strain LSv54 / DSM 12343).